The chain runs to 451 residues: Amino-acid acetyltransferase (451 aa).

Residues 305–451 (EYLREATLDD…RRSMVLMKKL (147 aa)) form the N-acetyltransferase domain.

This sequence belongs to the acetyltransferase family. ArgA subfamily.

The protein localises to the cytoplasm. The catalysed reaction is L-glutamate + acetyl-CoA = N-acetyl-L-glutamate + CoA + H(+). It participates in amino-acid biosynthesis; L-arginine biosynthesis; N(2)-acetyl-L-ornithine from L-glutamate: step 1/4. This is Amino-acid acetyltransferase (argA) from Ralstonia nicotianae (strain ATCC BAA-1114 / GMI1000) (Ralstonia solanacearum).